A 350-amino-acid chain; its full sequence is Protein RecA (350 aa).

G80–T87 lines the ATP pocket.

It belongs to the RecA family.

It localises to the cytoplasm. Can catalyze the hydrolysis of ATP in the presence of single-stranded DNA, the ATP-dependent uptake of single-stranded DNA by duplex DNA, and the ATP-dependent hybridization of homologous single-stranded DNAs. It interacts with LexA causing its activation and leading to its autocatalytic cleavage. This Chlorobium limicola (strain DSM 245 / NBRC 103803 / 6330) protein is Protein RecA.